The chain runs to 1097 residues: DNA-directed RNA polymerase subunit beta (1097 aa).

The segment at glutamine 1072 to aspartate 1097 is disordered.

Belongs to the RNA polymerase beta chain family. In cyanobacteria the RNAP catalytic core is composed of 2 alpha, 1 beta, 1 beta', 1 gamma and 1 omega subunit. When a sigma factor is associated with the core the holoenzyme is formed, which can initiate transcription.

The catalysed reaction is RNA(n) + a ribonucleoside 5'-triphosphate = RNA(n+1) + diphosphate. In terms of biological role, DNA-dependent RNA polymerase catalyzes the transcription of DNA into RNA using the four ribonucleoside triphosphates as substrates. This Prochlorococcus marinus (strain MIT 9303) protein is DNA-directed RNA polymerase subunit beta.